A 684-amino-acid chain; its full sequence is Threonine--tRNA ligase (684 aa).

The TGS domain occupies methionine 1–glutamate 60. Positions aspartate 256–proline 567 are catalytic. Positions 361, 412, and 544 each coordinate Zn(2+).

It belongs to the class-II aminoacyl-tRNA synthetase family. As to quaternary structure, homodimer. Zn(2+) is required as a cofactor.

Its subcellular location is the cytoplasm. The catalysed reaction is tRNA(Thr) + L-threonine + ATP = L-threonyl-tRNA(Thr) + AMP + diphosphate + H(+). Its function is as follows. Catalyzes the attachment of threonine to tRNA(Thr) in a two-step reaction: L-threonine is first activated by ATP to form Thr-AMP and then transferred to the acceptor end of tRNA(Thr). Also edits incorrectly charged L-seryl-tRNA(Thr). This chain is Threonine--tRNA ligase, found in Cutibacterium acnes (strain DSM 16379 / KPA171202) (Propionibacterium acnes).